A 122-amino-acid polypeptide reads, in one-letter code: Large ribosomal subunit protein bL12 (122 aa).

This sequence belongs to the bacterial ribosomal protein bL12 family. As to quaternary structure, homodimer. Part of the ribosomal stalk of the 50S ribosomal subunit. Forms a multimeric L10(L12)X complex, where L10 forms an elongated spine to which 2 to 4 L12 dimers bind in a sequential fashion. Binds GTP-bound translation factors.

Forms part of the ribosomal stalk which helps the ribosome interact with GTP-bound translation factors. Is thus essential for accurate translation. The protein is Large ribosomal subunit protein bL12 of Streptococcus mutans serotype c (strain ATCC 700610 / UA159).